The chain runs to 204 residues: Outer-membrane lipoprotein carrier protein (204 aa).

Residues 1–21 form the signal peptide; that stretch reads MKKIAVTCALLSAFAVSSVWA. Positions 169-204 are disordered; it reads QRSSYQLKSQQNGAVDMSKFTFTPPQGVTVDDQRNK. A compositionally biased stretch (polar residues) spans 171–181; it reads SSYQLKSQQNG.

This sequence belongs to the LolA family. Monomer.

It is found in the periplasm. Functionally, participates in the translocation of lipoproteins from the inner membrane to the outer membrane. Only forms a complex with a lipoprotein if the residue after the N-terminal Cys is not an aspartate (The Asp acts as a targeting signal to indicate that the lipoprotein should stay in the inner membrane). In Cronobacter sakazakii (strain ATCC BAA-894) (Enterobacter sakazakii), this protein is Outer-membrane lipoprotein carrier protein.